Here is a 1788-residue protein sequence, read N- to C-terminus: Protein TIC 214 (1788 aa).

Helical transmembrane passes span 25-45 (IINSVVVVGLYYGFFTTFSIG), 70-90 (IGFIAGQLMMFISIYYAPLHL), 95-115 (PHTITALVLPYLLFHFFWNNH), 132-152 (LNIQCIFLNSLIFQLFNHFIL), 180-200 (VGWLVGHIFFMKWVELVLFWI), and 223-243 (IFSILLFIVCIYYLGRMPSPL). Disordered regions lie at residues 248 to 297 (LKKT…EEKE) and 1482 to 1526 (DLEN…DFDR). 2 stretches are compositionally biased toward basic and acidic residues: residues 253–277 (KREERGKNKEETDVEIEKISEEKGT) and 1513–1526 (PLKKQTDGKEDFDR).

This sequence belongs to the TIC214 family. As to quaternary structure, part of the Tic complex.

It is found in the plastid. Its subcellular location is the chloroplast inner membrane. In terms of biological role, involved in protein precursor import into chloroplasts. May be part of an intermediate translocation complex acting as a protein-conducting channel at the inner envelope. The polypeptide is Protein TIC 214 (Ranunculus macranthus (Large buttercup)).